A 941-amino-acid chain; its full sequence is Protein BREAST CANCER SUSCEPTIBILITY 1 homolog (941 aa).

The RING-type zinc finger occupies 16-54; that stretch reads CPICLSLYNSAVSLSCNHVFCNACIVKSMKMDATCPVCK. 2 disordered regions span residues 87–282 and 303–528; these read FVSQ…ILPS and KVKV…GKDD. 2 stretches are compositionally biased toward basic and acidic residues: residues 96-115 and 125-136; these read SDKE…DKNR and KRNEYGKTKEID. A compositionally biased stretch (polar residues) spans 157 to 173; it reads LLQNLSAESLTKPTESV. Residues 175–196 are compositionally biased toward basic and acidic residues; it reads TAEKPKDYTENTVIRLDEHPSL. Positions 216–236 are enriched in polar residues; it reads NSSQRTESDQLLGTTPVNVPS. Residues 242–255 show a composition bias toward basic and acidic residues; it reads DSDHESPSKEDEQQ. Residues 298–305 carry the Nuclear localization signal 1 motif; it reads QKKLPKVK. Composition is skewed to polar residues over residues 329-357 and 376-391; these read GVSQ…SGTI and SKAQ…NVSN. Composition is skewed to basic and acidic residues over residues 428 to 453 and 477 to 487; these read GKGD…EKPS and KTSEKKLKLDS. The short motif at 444–451 is the Nuclear localization signal 2 element; it reads EKRSPTEK. The segment covering 489–498 has biased composition (polar residues); that stretch reads MISSKATQPH. The segment covering 512–528 has biased composition (basic and acidic residues); that stretch reads DKQDSRNNRKSTVGKDD. The C2HC pre-PHD-type zinc finger occupies 561-612; that stretch reads KFTCAFCQCSEDTEASGEMTHYYRGEPVSADFNGGSKVIHVHKNCAEWAPNV. The segment at 632–681 adopts a PHD-type; degenerate zinc-finger fold; it reads ISCSCCGLKGAALGCYNKSCKNSFHVTCAKLIPECRWDNVKFVMLCPLDA. BRCT domains are found at residues 724 to 819 and 840 to 941; these read KQFH…PYEI and KKPK…LVLI.

Forms heterodimer with BARD1/ROW1. In terms of tissue distribution, expressed ubiquitously with highest levels in flower buds. Mostly expressed in flowers and siliques, and, to a lower extent, in roots, rosette leaves, inflorescence and young cauline leaves.

The protein resides in the nucleus. Plays a role in DNA repair and in cell-cycle control. Required for the repair of DNA double-strand breaks (DSBs), both natural and induced by genotoxic stress, by homologous recombination (HR). The sequence is that of Protein BREAST CANCER SUSCEPTIBILITY 1 homolog from Arabidopsis thaliana (Mouse-ear cress).